The primary structure comprises 269 residues: Ribosomal RNA small subunit methyltransferase J (269 aa).

S-adenosyl-L-methionine contacts are provided by residues 125–126 and aspartate 179; that span reads ER.

Belongs to the methyltransferase superfamily. RsmJ family.

Its subcellular location is the cytoplasm. It carries out the reaction guanosine(1516) in 16S rRNA + S-adenosyl-L-methionine = N(2)-methylguanosine(1516) in 16S rRNA + S-adenosyl-L-homocysteine + H(+). In terms of biological role, specifically methylates the guanosine in position 1516 of 16S rRNA. This is Ribosomal RNA small subunit methyltransferase J from Pseudomonas syringae pv. syringae (strain B728a).